The following is a 405-amino-acid chain: Magnesium-protoporphyrin IX monomethyl ester [oxidative] cyclase, chloroplastic (405 aa).

The transit peptide at 1 to 44 (MAAEMALVKPITPKFINPMRTFSSSSKFSTIKMSATSQSNTTTT) directs the protein to the chloroplast. Residues 33–47 (MSATSQSNTTTTATK) show a composition bias toward low complexity. The tract at residues 33–54 (MSATSQSNTTTTATKPSKKGNK) is disordered.

Belongs to the AcsF family. It depends on Fe cation as a cofactor.

It is found in the plastid. Its subcellular location is the chloroplast. The catalysed reaction is Mg-protoporphyrin IX 13-monomethyl ester + 3 NADPH + 3 O2 + 2 H(+) = 3,8-divinyl protochlorophyllide a + 3 NADP(+) + 5 H2O. It participates in porphyrin-containing compound metabolism; chlorophyll biosynthesis. Its function is as follows. Catalyzes the formation of the isocyclic ring in chlorophyll biosynthesis. Mediates the cyclase reaction, which results in the formation of divinylprotochlorophyllide (Pchlide) characteristic of all chlorophylls from magnesium-protoporphyrin IX 13-monomethyl ester (MgPMME). This is Magnesium-protoporphyrin IX monomethyl ester [oxidative] cyclase, chloroplastic (CRD1) from Euphorbia esula (Leafy spurge).